The following is a 148-amino-acid chain: Deoxyuridine 5'-triphosphate nucleotidohydrolase (148 aa).

Substrate is bound by residues 68-70, Asn-81, 85-87, and Lys-95; these read RSG and TID.

This sequence belongs to the dUTPase family. Mg(2+) serves as cofactor.

The catalysed reaction is dUTP + H2O = dUMP + diphosphate + H(+). It functions in the pathway pyrimidine metabolism; dUMP biosynthesis; dUMP from dCTP (dUTP route): step 2/2. Functionally, this enzyme is involved in nucleotide metabolism: it produces dUMP, the immediate precursor of thymidine nucleotides and it decreases the intracellular concentration of dUTP so that uracil cannot be incorporated into DNA. This is Deoxyuridine 5'-triphosphate nucleotidohydrolase from Rickettsia felis (strain ATCC VR-1525 / URRWXCal2) (Rickettsia azadi).